Here is a 160-residue protein sequence, read N- to C-terminus: D-aminoacyl-tRNA deacylase (160 aa).

The Gly-cisPro motif, important for rejection of L-amino acids motif lies at 137–138; that stretch reads GP.

It belongs to the DTD family. In terms of assembly, homodimer.

It is found in the cytoplasm. It catalyses the reaction glycyl-tRNA(Ala) + H2O = tRNA(Ala) + glycine + H(+). The enzyme catalyses a D-aminoacyl-tRNA + H2O = a tRNA + a D-alpha-amino acid + H(+). Functionally, an aminoacyl-tRNA editing enzyme that deacylates mischarged D-aminoacyl-tRNAs. Also deacylates mischarged glycyl-tRNA(Ala), protecting cells against glycine mischarging by AlaRS. Acts via tRNA-based rather than protein-based catalysis; rejects L-amino acids rather than detecting D-amino acids in the active site. By recycling D-aminoacyl-tRNA to D-amino acids and free tRNA molecules, this enzyme counteracts the toxicity associated with the formation of D-aminoacyl-tRNA entities in vivo and helps enforce protein L-homochirality. This Chloroflexus aurantiacus (strain ATCC 29364 / DSM 637 / Y-400-fl) protein is D-aminoacyl-tRNA deacylase.